A 206-amino-acid polypeptide reads, in one-letter code: Tumor protein D54 (206 aa).

Met-1 is modified (N-acetylmethionine). The span at 1-14 shows a compositional bias: polar residues; sequence MDSAGQDINLNSPN. The disordered stretch occupies residues 1–24; the sequence is MDSAGQDINLNSPNKGLLSDSMTD. 4 positions are modified to phosphoserine: Ser-3, Ser-12, Ser-19, and Ser-21. Residues 38–82 adopt a coiled-coil conformation; the sequence is VEGLTEAEEEELRAELTKVEEEIVTLRQVLAAKERHCGELKRRLG. Phosphoserine occurs at positions 96, 149, and 161. Position 163 is a phosphothreonine (Thr-163). Ser-166 is subject to Phosphoserine. A Phosphothreonine modification is found at Thr-173. The segment covering 175 to 185 has biased composition (basic and acidic residues); sequence KSKVVGDRENG. The tract at residues 175 to 206 is disordered; sequence KSKVVGDRENGSDNLPSSAGSGDKPLSDPAPF. Phosphoserine is present on residues Ser-192 and Ser-195.

This sequence belongs to the TPD52 family. Forms a homodimer or heterodimer with other members of the family. Interacts with MAL2.

The protein is Tumor protein D54 (TPD52L2) of Homo sapiens (Human).